Consider the following 226-residue polypeptide: Phosphatidylserine decarboxylase proenzyme (226 aa).

S184 acts as the Schiff-base intermediate with substrate; via pyruvic acid in catalysis. S184 is subject to Pyruvic acid (Ser); by autocatalysis.

The protein belongs to the phosphatidylserine decarboxylase family. PSD-A subfamily. In terms of assembly, heterodimer of a large membrane-associated beta subunit and a small pyruvoyl-containing alpha subunit. The cofactor is pyruvate. Is synthesized initially as an inactive proenzyme. Formation of the active enzyme involves a self-maturation process in which the active site pyruvoyl group is generated from an internal serine residue via an autocatalytic post-translational modification. Two non-identical subunits are generated from the proenzyme in this reaction, and the pyruvate is formed at the N-terminus of the alpha chain, which is derived from the carboxyl end of the proenzyme. The post-translation cleavage follows an unusual pathway, termed non-hydrolytic serinolysis, in which the side chain hydroxyl group of the serine supplies its oxygen atom to form the C-terminus of the beta chain, while the remainder of the serine residue undergoes an oxidative deamination to produce ammonia and the pyruvoyl prosthetic group on the alpha chain.

Its subcellular location is the cell membrane. It carries out the reaction a 1,2-diacyl-sn-glycero-3-phospho-L-serine + H(+) = a 1,2-diacyl-sn-glycero-3-phosphoethanolamine + CO2. It functions in the pathway phospholipid metabolism; phosphatidylethanolamine biosynthesis; phosphatidylethanolamine from CDP-diacylglycerol: step 2/2. Its function is as follows. Catalyzes the formation of phosphatidylethanolamine (PtdEtn) from phosphatidylserine (PtdSer). The sequence is that of Phosphatidylserine decarboxylase proenzyme from Ehrlichia chaffeensis (strain ATCC CRL-10679 / Arkansas).